The chain runs to 224 residues: Urease accessory protein UreF (224 aa).

The protein belongs to the UreF family. As to quaternary structure, ureD, UreF and UreG form a complex that acts as a GTP-hydrolysis-dependent molecular chaperone, activating the urease apoprotein by helping to assemble the nickel containing metallocenter of UreC. The UreE protein probably delivers the nickel.

The protein resides in the cytoplasm. In terms of biological role, required for maturation of urease via the functional incorporation of the urease nickel metallocenter. The chain is Urease accessory protein UreF from Pseudomonas putida (strain GB-1).